Reading from the N-terminus, the 315-residue chain is Rhomboid-related protein 4 (315 aa).

The Cytoplasmic portion of the chain corresponds to 1-21; it reads MQRRSRGINTGLILLLSQIFH. Residues 22-42 form a helical membrane-spanning segment; the sequence is VGINNIPPVTLATLALNIWFF. The Extracellular segment spans residues 43-106; the sequence is LNPQKPLYSS…RRLGSRWFAY (64 aa). Residues 107-127 traverse the membrane as a helical segment; the sequence is VITAFSVLTGVVYLLLQFAVA. At 128 to 138 the chain is on the cytoplasmic side; sequence EFMDEPDFKRS. The helical transmembrane segment at 139–157 threads the bilayer; sequence CAVGFSGVLFALKVLNNHY. Catalysis depends on Ser-144, which acts as the Nucleophile. Topologically, residues 158–180 are extracellular; it reads CPGGFVNILGFPVPNRFACWVEL. Residues 181–201 traverse the membrane as a helical segment; that stretch reads VAIHLFSPGTSFAGHLAGILV. The active site involves His-195. Over 202-315 the chain is Cytoplasmic; it reads GLMYTQGPLK…RQRLHRFDSQ (114 aa). The ubiquitin-binding domain (UBD) stretch occupies residues 269–284; sequence SEEEQLERALQASLWD. Residues 283-315 are disordered; sequence WDRGNTRNSPPPYGFHLSPEEMRRQRLHRFDSQ. The segment covering 300 to 315 has biased composition (basic and acidic residues); the sequence is SPEEMRRQRLHRFDSQ. Residues 301 to 315 form a VCP/p97-interacting motif (VIM) region; sequence PEEMRRQRLHRFDSQ.

Belongs to the peptidase S54 family. As to quaternary structure, interacts (via C-terminal domain) with VCP. Interacts with ubiquitin and ubiquitinated proteins. Interacts with BIK and STEAP3. As to expression, expressed strongly in testis.

Its subcellular location is the endoplasmic reticulum membrane. The protein resides in the mitochondrion membrane. The catalysed reaction is Cleaves type-1 transmembrane domains using a catalytic dyad composed of serine and histidine that are contributed by different transmembrane domains.. With respect to regulation, inhibited by aprotinin. Functionally, intramembrane-cleaving serine protease that cleaves single transmembrane or multi-pass membrane proteins in the hydrophobic plane of the membrane, luminal loops and juxtamembrane regions. Involved in regulated intramembrane proteolysis and the subsequent release of functional polypeptides from their membrane anchors. Functional component of endoplasmic reticulum-associated degradation (ERAD) for misfolded membrane proteins. Required for the degradation process of some specific misfolded endoplasmic reticulum (ER) luminal proteins. Participates in the transfer of misfolded proteins from the ER to the cytosol, where they are destroyed by the proteasome in a ubiquitin-dependent manner. Functions in BIK, MPZ, PKD1, PTCRA, RHO, STEAP3 and TRAC processing. Involved in the regulation of exosomal secretion; inhibits the TSAP6-mediated secretion pathway. Involved in the regulation of apoptosis; modulates BIK-mediated apoptotic activity. Also plays a role in the regulation of spermatogenesis; inhibits apoptotic activity in spermatogonia. This is Rhomboid-related protein 4 (RHBDD1) from Homo sapiens (Human).